The primary structure comprises 116 residues: Large ribosomal subunit protein bL17 (116 aa).

It belongs to the bacterial ribosomal protein bL17 family. As to quaternary structure, part of the 50S ribosomal subunit. Contacts protein L32.

The protein is Large ribosomal subunit protein bL17 of Synechococcus sp. (strain CC9311).